A 468-amino-acid chain; its full sequence is 6-phospho-beta-galactosidase (468 aa).

Residues Gln19, His116, Asn159, Glu160, and Asn297 each coordinate D-galactose 6-phosphate. Glu160 functions as the Proton donor in the catalytic mechanism. The Nucleophile role is filled by Glu375. The D-galactose 6-phosphate site is built by Ser428, Trp429, Lys435, and Tyr437.

Belongs to the glycosyl hydrolase 1 family.

It catalyses the reaction a 6-phospho-beta-D-galactoside + H2O = D-galactose 6-phosphate + an alcohol. It functions in the pathway carbohydrate metabolism; lactose degradation; D-galactose 6-phosphate and beta-D-glucose from lactose 6-phosphate: step 1/1. This chain is 6-phospho-beta-galactosidase, found in Streptococcus pyogenes serotype M18 (strain MGAS8232).